A 293-amino-acid chain; its full sequence is Ribosomal RNA small subunit methyltransferase H (293 aa).

S-adenosyl-L-methionine is bound by residues 32-34, aspartate 51, phenylalanine 78, aspartate 99, and glutamine 106; that span reads GGH. Residues 274-293 are disordered; sequence DEIRENPASRSAKMRVARRL.

It belongs to the methyltransferase superfamily. RsmH family.

The protein localises to the cytoplasm. The catalysed reaction is cytidine(1402) in 16S rRNA + S-adenosyl-L-methionine = N(4)-methylcytidine(1402) in 16S rRNA + S-adenosyl-L-homocysteine + H(+). Its function is as follows. Specifically methylates the N4 position of cytidine in position 1402 (C1402) of 16S rRNA. The sequence is that of Ribosomal RNA small subunit methyltransferase H from Sulfurihydrogenibium azorense (strain DSM 15241 / OCM 825 / Az-Fu1).